A 532-amino-acid chain; its full sequence is Chaperonin GroEL 2 (532 aa).

Residues Thr30–Pro33, Lys51, Asp87–Thr91, Gly415, Asn479–Ala481, and Asp495 each bind ATP.

Belongs to the chaperonin (HSP60) family. Forms a cylinder of 14 subunits composed of two heptameric rings stacked back-to-back. Interacts with the co-chaperonin GroES.

Its subcellular location is the cytoplasm. It carries out the reaction ATP + H2O + a folded polypeptide = ADP + phosphate + an unfolded polypeptide.. Functionally, together with its co-chaperonin GroES, plays an essential role in assisting protein folding. The GroEL-GroES system forms a nano-cage that allows encapsulation of the non-native substrate proteins and provides a physical environment optimized to promote and accelerate protein folding. The sequence is that of Chaperonin GroEL 2 from Vibrio parahaemolyticus serotype O3:K6 (strain RIMD 2210633).